The sequence spans 380 residues: Cytochrome b (380 aa).

4 helical membrane-spanning segments follow: residues 33–53 (FGSL…FLAM), 77–98 (WLIR…FIHV), 113–133 (WNIG…GYVL), and 178–198 (FFAF…VHLL). The heme b site is built by His83 and His97. Heme b is bound by residues His182 and His196. His201 lines the a ubiquinone pocket. 4 helical membrane passes run 226–246 (IKDL…VLFF), 288–308 (LGGV…PLLN), 320–340 (ITQV…XXXX), and 347–367 (XXXX…IFMP).

It belongs to the cytochrome b family. As to quaternary structure, the cytochrome bc1 complex contains 11 subunits: 3 respiratory subunits (MT-CYB, CYC1 and UQCRFS1), 2 core proteins (UQCRC1 and UQCRC2) and 6 low-molecular weight proteins (UQCRH/QCR6, UQCRB/QCR7, UQCRQ/QCR8, UQCR10/QCR9, UQCR11/QCR10 and a cleavage product of UQCRFS1). This cytochrome bc1 complex then forms a dimer. The cofactor is heme b.

Its subcellular location is the mitochondrion inner membrane. Functionally, component of the ubiquinol-cytochrome c reductase complex (complex III or cytochrome b-c1 complex) that is part of the mitochondrial respiratory chain. The b-c1 complex mediates electron transfer from ubiquinol to cytochrome c. Contributes to the generation of a proton gradient across the mitochondrial membrane that is then used for ATP synthesis. This is Cytochrome b (MT-CYB) from Rhipidomys leucodactylus (White-footed climbing mouse).